The primary structure comprises 496 residues: E3 ubiquitin-protein ligase Hakai (496 aa).

A disordered region spans residues 35–60 (PNKIKPAPRPQRNMNRIPTKPQPGFD). The RING-type; degenerate zinc-finger motif lies at 104–144 (CDKCGLPIKIYGRMIPCKHVFCYDCALMHEKKADKLCPGTL). The HYB domain stretch occupies residues 157-215 (CNDPVQRIEQCARGSLFMCSIVQGCKRTYLSQRDLQAHINHRHMRASKPTARPQPEPIH). Residues 173–199 (FMCSIVQGCKRTYLSQRDLQAHINHRH) form a C2H2-type zinc finger. Residues 304–314 (VPIQDDSNSGA) show a composition bias toward polar residues. The interval 304–496 (VPIQDDSNSG…DQARYRPYYQ (193 aa)) is disordered. 3 stretches are compositionally biased toward pro residues: residues 350-360 (APPPPPPPPIS), 380-397 (GPPPPMTTAPPPITPPPG), and 407-430 (MNHPPPGPPPQHGGPPVNAPPPHH). Residues 434–449 (SSMPQFNEDQGTLSPP) are compositionally biased toward polar residues. Residues 464-483 (PRGPPPRMQGPPSQAPMPGP) are compositionally biased toward pro residues.

It belongs to the Hakai family. As to quaternary structure, homodimer. Interacts with tyrosine-phosphorylated SRC substrates. Component of the WMM complex, a N6-methyltransferase complex composed of a catalytic subcomplex, named MAC, and of an associated subcomplex, named MACOM. Component of the MACOM subcomplex.

The protein resides in the nucleus speckle. It localises to the nucleus. It is found in the nucleoplasm. It carries out the reaction S-ubiquitinyl-[E2 ubiquitin-conjugating enzyme]-L-cysteine + [acceptor protein]-L-lysine = [E2 ubiquitin-conjugating enzyme]-L-cysteine + N(6)-ubiquitinyl-[acceptor protein]-L-lysine.. The protein operates within protein modification; protein ubiquitination. E3 ubiquitin-protein ligase that mediates ubiquitination of several tyrosine-phosphorylated Src substrates. Associated component of the WMM complex, a complex that mediates N6-methyladenosine (m6A) methylation of RNAs, a modification that plays a role in the efficiency of mRNA splicing and RNA processing. This is E3 ubiquitin-protein ligase Hakai from Xenopus laevis (African clawed frog).